We begin with the raw amino-acid sequence, 136 residues long: Nanos homolog 2 (136 aa).

The interval 27–51 is disordered; sequence KQRQEGEVAEEPNSRPQEKSEQDLE. Over residues 28 to 48 the composition is skewed to basic and acidic residues; sequence QRQEGEVAEEPNSRPQEKSEQ. The Nanos-type zinc-finger motif lies at 60–114; that stretch reads ICNFCKHNGESRHVYTSHQLKTPEGVVVCPILRHYVCPLCGATGDQAHTLKYCPL. Residues C61, C64, H77, C88, C96, C99, H107, and C112 each coordinate Zn(2+). 2 short sequence motifs (C2HC) span residues 61-88 and 96-112; these read CNFC…VVVC and CPLC…LKYC.

The protein belongs to the nanos family. As to quaternary structure, interacts with CNOT1, CNOT3, CNOT6L, CNOT7 and CNOT9. Predominantly expressed in male germ cells. Expressed in self-renewing spermatogonial stem cells and developing gonads.

The protein localises to the cytoplasm. It is found in the P-body. It localises to the perinuclear region. In terms of biological role, plays a key role in the sexual differentiation of germ cells by promoting the male fate but suppressing the female fate. Represses the female fate pathways by suppressing meiosis, which in turn results in the promotion of the male fate. Maintains the suppression of meiosis by preventing STRA8 expression, which is required for premeiotic DNA replication, after CYP26B1 is decreased. Regulates the localization of the CCR4-NOT deadenylation complex to P-bodies and plays a role in recruiting the complex to trigger the degradation of mRNAs involved in meiosis. Required for the maintenance of the spermatogonial stem cell population. Not essential for the assembly of P-bodies but is required for the maintenance of their normal state. This chain is Nanos homolog 2 (Nanos2), found in Mus musculus (Mouse).